A 36-amino-acid chain; its full sequence is Photosystem I reaction center subunit VIII (36 aa).

Residues 7 to 29 (PSILVPLVGIIFPGISMALLFIY) form a helical membrane-spanning segment.

It belongs to the PsaI family.

It localises to the plastid. The protein resides in the chloroplast thylakoid membrane. Its function is as follows. May help in the organization of the PsaL subunit. This Gracilaria tenuistipitata var. liui (Red alga) protein is Photosystem I reaction center subunit VIII.